Reading from the N-terminus, the 188-residue chain is GTP cyclohydrolase 1 (188 aa).

Positions 78, 81, and 150 each coordinate Zn(2+).

It belongs to the GTP cyclohydrolase I family. As to quaternary structure, toroid-shaped homodecamer, composed of two pentamers of five dimers.

It carries out the reaction GTP + H2O = 7,8-dihydroneopterin 3'-triphosphate + formate + H(+). It participates in cofactor biosynthesis; 7,8-dihydroneopterin triphosphate biosynthesis; 7,8-dihydroneopterin triphosphate from GTP: step 1/1. This Halalkalibacterium halodurans (strain ATCC BAA-125 / DSM 18197 / FERM 7344 / JCM 9153 / C-125) (Bacillus halodurans) protein is GTP cyclohydrolase 1.